We begin with the raw amino-acid sequence, 272 residues long: Acyl-[acyl-carrier-protein]--UDP-N-acetylglucosamine O-acyltransferase (272 aa).

Belongs to the transferase hexapeptide repeat family. LpxA subfamily. As to quaternary structure, homotrimer.

The protein resides in the cytoplasm. The catalysed reaction is a (3R)-hydroxyacyl-[ACP] + UDP-N-acetyl-alpha-D-glucosamine = a UDP-3-O-[(3R)-3-hydroxyacyl]-N-acetyl-alpha-D-glucosamine + holo-[ACP]. It participates in glycolipid biosynthesis; lipid IV(A) biosynthesis; lipid IV(A) from (3R)-3-hydroxytetradecanoyl-[acyl-carrier-protein] and UDP-N-acetyl-alpha-D-glucosamine: step 1/6. Its function is as follows. Involved in the biosynthesis of lipid A, a phosphorylated glycolipid that anchors the lipopolysaccharide to the outer membrane of the cell. This chain is Acyl-[acyl-carrier-protein]--UDP-N-acetylglucosamine O-acyltransferase, found in Rhizobium johnstonii (strain DSM 114642 / LMG 32736 / 3841) (Rhizobium leguminosarum bv. viciae).